The sequence spans 198 residues: Imidazoleglycerol-phosphate dehydratase (198 aa).

Belongs to the imidazoleglycerol-phosphate dehydratase family.

Its subcellular location is the cytoplasm. The enzyme catalyses D-erythro-1-(imidazol-4-yl)glycerol 3-phosphate = 3-(imidazol-4-yl)-2-oxopropyl phosphate + H2O. It participates in amino-acid biosynthesis; L-histidine biosynthesis; L-histidine from 5-phospho-alpha-D-ribose 1-diphosphate: step 6/9. This chain is Imidazoleglycerol-phosphate dehydratase, found in Streptomyces griseus subsp. griseus (strain JCM 4626 / CBS 651.72 / NBRC 13350 / KCC S-0626 / ISP 5235).